The sequence spans 97 residues: uncharacterized protein (97 aa).

This is an uncharacterized protein from Methanothermococcus thermolithotrophicus (Methanococcus thermolithotrophicus).